The chain runs to 63 residues: Large ribosomal subunit protein bL35 (63 aa).

A compositionally biased stretch (basic residues) spans 1–15 (MPKIKTHRGAAKRFK). The interval 1 to 26 (MPKIKTHRGAAKRFKQTAGGKWKGSH) is disordered.

It belongs to the bacterial ribosomal protein bL35 family.

The protein is Large ribosomal subunit protein bL35 of Pelotomaculum thermopropionicum (strain DSM 13744 / JCM 10971 / SI).